Consider the following 350-residue polypeptide: MSISQLSRKNVQALTPYQSARRLGGNGDVWLNANEYPTSPDFNLSERIFNRYPEPQPEAVIKGYAAYADVKPENVIVTRGGDESIELLIKGFCEPEDKVLYCPPTYGMYAVSAETLGIATKTVPLTEDFQLDLPEIEKNLAGVKVIFVCSPNNPTGNVLNQADLIRLLDITAGSAIVVVDEAYIEFSPETSMIKQLGNYPHLAIIRTLSKAFALAGLRCGFTLANPELIGVLQKVIAPYPLPVPVSDIAAQALQPQGVAQMKMRVADVLANRAWLIGELKQIPSVVKIFATEANYVLVKFQDGEKVFNALWEKGIILRDQHKAFGLKNCIRISIGTRAELEKTVVALKLA.

An N6-(pyridoxal phosphate)lysine modification is found at Lys-210.

Belongs to the class-II pyridoxal-phosphate-dependent aminotransferase family. Histidinol-phosphate aminotransferase subfamily. In terms of assembly, homodimer. The cofactor is pyridoxal 5'-phosphate.

It carries out the reaction L-histidinol phosphate + 2-oxoglutarate = 3-(imidazol-4-yl)-2-oxopropyl phosphate + L-glutamate. It participates in amino-acid biosynthesis; L-histidine biosynthesis; L-histidine from 5-phospho-alpha-D-ribose 1-diphosphate: step 7/9. The sequence is that of Histidinol-phosphate aminotransferase 2 from Mannheimia succiniciproducens (strain KCTC 0769BP / MBEL55E).